The sequence spans 259 residues: Ribosomal RNA small subunit methyltransferase J (259 aa).

Residues 101 to 102 (RD), 117 to 118 (ER), 153 to 154 (SS), and D176 contribute to the S-adenosyl-L-methionine site.

This sequence belongs to the methyltransferase superfamily. RsmJ family.

Its subcellular location is the cytoplasm. It catalyses the reaction guanosine(1516) in 16S rRNA + S-adenosyl-L-methionine = N(2)-methylguanosine(1516) in 16S rRNA + S-adenosyl-L-homocysteine + H(+). Functionally, specifically methylates the guanosine in position 1516 of 16S rRNA. The protein is Ribosomal RNA small subunit methyltransferase J of Aliivibrio fischeri (strain MJ11) (Vibrio fischeri).